The primary structure comprises 327 residues: Regulatory protein MsrR (327 aa).

The span at 1–18 shows a compositional bias: basic and acidic residues; the sequence is MDKETNDNEYRRQSEHRT. Residues 1 to 24 form a disordered region; that stretch reads MDKETNDNEYRRQSEHRTSAPKRK. Topologically, residues 1–31 are cytoplasmic; sequence MDKETNDNEYRRQSEHRTSAPKRKKKKKIRK. Residues 32–52 form a helical; Signal-anchor for type II membrane protein membrane-spanning segment; that stretch reads LPIILLIVVILLIALVVYIVH. At 53–327 the chain is on the extracellular side; that stretch reads SYNSGVEYAK…QAIKDFLDED (275 aa).

This sequence belongs to the LytR/CpsA/Psr (LCP) family.

It localises to the cell membrane. Involved in SarA attenuation. Affects resistance to oxacillin and teicoplanin, as well as the synthesis of virulence factors. The polypeptide is Regulatory protein MsrR (msrR) (Staphylococcus aureus (strain NCTC 8325 / PS 47)).